The following is a 187-amino-acid chain: Large ribosomal subunit protein uL5 (187 aa).

Belongs to the universal ribosomal protein uL5 family. In terms of assembly, part of the 50S ribosomal subunit; part of the 5S rRNA/L5/L18/L25 subcomplex. Contacts the 5S rRNA and the P site tRNA. Forms a bridge to the 30S subunit in the 70S ribosome.

Its function is as follows. This is one of the proteins that bind and probably mediate the attachment of the 5S RNA into the large ribosomal subunit, where it forms part of the central protuberance. In the 70S ribosome it contacts protein S13 of the 30S subunit (bridge B1b), connecting the 2 subunits; this bridge is implicated in subunit movement. Contacts the P site tRNA; the 5S rRNA and some of its associated proteins might help stabilize positioning of ribosome-bound tRNAs. This chain is Large ribosomal subunit protein uL5, found in Dinoroseobacter shibae (strain DSM 16493 / NCIMB 14021 / DFL 12).